The primary structure comprises 318 residues: NADH-ubiquinone oxidoreductase chain 1 (318 aa).

8 helical membrane-spanning segments follow: residues 2-22 (PMAN…FLML), 68-88 (ITLY…LWTP), 100-120 (LGLL…LWSG), 146-166 (LAII…STLI), 171-191 (HLWL…STLA), 231-251 (IIMM…DALS), 253-273 (ELYT…FLWI), and 294-314 (LPLT…ISSI).

This sequence belongs to the complex I subunit 1 family. As to quaternary structure, core subunit of respiratory chain NADH dehydrogenase (Complex I) which is composed of 45 different subunits.

The protein resides in the mitochondrion inner membrane. It carries out the reaction a ubiquinone + NADH + 5 H(+)(in) = a ubiquinol + NAD(+) + 4 H(+)(out). Core subunit of the mitochondrial membrane respiratory chain NADH dehydrogenase (Complex I) which catalyzes electron transfer from NADH through the respiratory chain, using ubiquinone as an electron acceptor. Essential for the catalytic activity and assembly of complex I. The polypeptide is NADH-ubiquinone oxidoreductase chain 1 (MT-ND1) (Homo sapiens (Human)).